The following is a 457-amino-acid chain: Peptidyl-prolyl cis-trans isomerase FKBP5 (457 aa).

Methionine 1 bears the N-acetylmethionine mark. Positions 1–26 (MTTDEGAKNNGESPTATVAEQGEDIT) are disordered. Phosphoserine is present on serine 13. PPIase FKBP-type domains are found at residues 50 to 138 (GDKV…LDFK) and 165 to 251 (GATV…KSFE). TPR repeat units lie at residues 268–301 (AAIV…LEME), 317–350 (LAAF…DSAN), and 351–384 (GKGL…NPQN). The tract at residues 420–457 (DAKEEANKAMGKKTSEGVTNEKGTDSQAMEEEKPEGHV) is disordered. At serine 445 the chain carries Phosphoserine.

Part of a heteromultimeric cytoplasmic complex with HSP90AA1, HSPA1A/HSPA1B and steroid receptors. Upon ligand binding dissociates from the complex and FKBP4 takes its place. Interacts with functionally mature heterooligomeric progesterone receptor complexes along with HSP90 and TEBP. Interacts with IFI44L; this interaction modulates the kinase activity of IKBKB and IKBKE. Interacts with IKBKB and IKBKE.

It is found in the cytoplasm. It localises to the nucleus. The catalysed reaction is [protein]-peptidylproline (omega=180) = [protein]-peptidylproline (omega=0). Its activity is regulated as follows. Inhibited by FK506 but not cyclosporin. Immunophilin protein with PPIase and co-chaperone activities. Component of unligated steroid receptors heterocomplexes through interaction with heat-shock protein 90 (HSP90). Plays a role in the intracellular trafficking of heterooligomeric forms of steroid hormone receptors maintaining the complex into the cytoplasm when unliganded. Acts as a regulator of Akt/AKT1 activity by promoting the interaction between Akt/AKT1 and PHLPP1, thereby enhancing dephosphorylation and subsequent activation of Akt/AKT1. Interacts with IKBKE and IKBKB which facilitates IKK complex assembly leading to increased IKBKE and IKBKB kinase activity, NF-kappaB activation, and IFN production. This is Peptidyl-prolyl cis-trans isomerase FKBP5 (FKBP5) from Pongo abelii (Sumatran orangutan).